We begin with the raw amino-acid sequence, 343 residues long: S-adenosylmethionine:tRNA ribosyltransferase-isomerase (343 aa).

Belongs to the QueA family. In terms of assembly, monomer.

It localises to the cytoplasm. The enzyme catalyses 7-aminomethyl-7-carbaguanosine(34) in tRNA + S-adenosyl-L-methionine = epoxyqueuosine(34) in tRNA + adenine + L-methionine + 2 H(+). The protein operates within tRNA modification; tRNA-queuosine biosynthesis. Its function is as follows. Transfers and isomerizes the ribose moiety from AdoMet to the 7-aminomethyl group of 7-deazaguanine (preQ1-tRNA) to give epoxyqueuosine (oQ-tRNA). The chain is S-adenosylmethionine:tRNA ribosyltransferase-isomerase from Coxiella burnetii (strain Dugway 5J108-111).